We begin with the raw amino-acid sequence, 634 residues long: Chaperone protein HtpG (634 aa).

The interval 1 to 342 (MSVETQKETL…SNDLSLNVSR (342 aa)) is a; substrate-binding. The tract at residues 343–559 (EILQKDPVID…EQDLGLQMRQ (217 aa)) is b. Residues 560 to 634 (ILEASGQKVP…LNKLLVELSA (75 aa)) form a c region.

Belongs to the heat shock protein 90 family. As to quaternary structure, homodimer.

It localises to the cytoplasm. Molecular chaperone. Has ATPase activity. The polypeptide is Chaperone protein HtpG (Pseudomonas paraeruginosa (strain DSM 24068 / PA7) (Pseudomonas aeruginosa (strain PA7))).